A 2849-amino-acid chain; its full sequence is Polycystin-1-like protein 1 (2849 aa).

Over 1–1748 (MAEEAAQNIS…SDISKLQSHP (1748 aa)) the chain is Extracellular. N-linked (GlcNAc...) asparagine glycans are attached at residues Asn-8, Asn-295, Asn-338, Asn-376, Asn-447, Asn-482, Asn-514, Asn-605, Asn-657, Asn-751, Asn-875, Asn-926, and Asn-937. PKD domains lie at 508–590 (SVSV…VQKK) and 592–673 (VANR…VCEP). The REJ domain maps to 674–1571 (CQPPLVKNMG…GEEDGLDNRR (898 aa)). Over residues 970–987 (NLLPTEPGTADPDATTTP) the composition is skewed to low complexity. Disordered stretches follow at residues 970–1068 (NLLP…PHLS) and 1081–1118 (IPSG…DPSL). Over residues 1053 to 1068 (RSERSQPTHSPDPHLS) the composition is skewed to basic and acidic residues. 6 N-linked (GlcNAc...) asparagine glycosylation sites follow: Asn-1233, Asn-1301, Asn-1306, Asn-1572, Asn-1681, and Asn-1716. The 149-residue stretch at 1587-1735 (QFTELSENPQ…ALLRRKLKAS (149 aa)) folds into the GAIN-B domain. Cys-1691 and Cys-1717 are joined by a disulfide. A GPS region spans residues 1691–1735 (CLFWDKREWKSERFSPQPGTSPEKVNCSYHRLAAFALLRRKLKAS). A helical transmembrane segment spans residues 1749–1769 (ENLLPSIFIMGSVILYGFLVA). Residues 1770-1956 (KSRQVDHHEK…SSSRYLHTPR (187 aa)) lie on the Cytoplasmic side of the membrane. The region spanning 1796–1913 (QLYAVVIDTG…HDGRVERELT (118 aa)) is the PLAT domain. A helical membrane pass occupies residues 1957–1977 (LTVSFSLLCVYACLTALVAAG). Residues 1978-1992 (GQEQPHLDVSPTLGS) lie on the Extracellular side of the membrane. Residues 1993–2013 (FRVGLLCTLLASPGAQLLSLL) form a helical membrane-spanning segment. Residues 2014 to 2135 (FRLSKEAPGS…SRALQPWWSS (122 aa)) lie on the Cytoplasmic side of the membrane. The tract at residues 2023 to 2089 (SARVEPHSPL…GTACPAPKLQ (67 aa)) is disordered. A helical membrane pass occupies residues 2136-2156 (AVWAICGTASLACSLGTGFLA). At 2157–2174 (YRFGQEQCVQWLHLLSLS) the chain is on the extracellular side. A helical transmembrane segment spans residues 2175 to 2195 (VVCCIFITQPLMVCLMALGFA). At 2196–2281 (WKRRADNHFF…QRMRRESRTR (86 aa)) the chain is on the cytoplasmic side. Residues 2282-2302 (AALRDISMDILMLLLLLCVIY) traverse the membrane as a helical segment. Over 2303–2522 (GRFSQDEYSL…FRSDSALQYH (220 aa)) the chain is Extracellular. A glycan (N-linked (GlcNAc...) asparagine) is linked at Asn-2426. The chain crosses the membrane as a helical span at residues 2523 to 2543 (LMLPQLVFLALSLIHLCVQLY). Over 2544–2562 (RMMDKGVLSYWRKPRNWLE) the chain is Cytoplasmic. Residues 2563–2583 (LSVVGVSLTYYAVSGHLVTLA) form a helical membrane-spanning segment. Residues 2584–2616 (GDVTNQFHRGLCRAFMDLTLMASWNQRARWLRG) are Extracellular-facing. The helical transmembrane segment at 2617–2637 (ILLFLFTLKCVYLPGIQNTMA) threads the bilayer. The Cytoplasmic segment spans residues 2638–2646 (SCSSMMRHS). The chain crosses the membrane as a helical span at residues 2647 to 2667 (LPSIFVAGLVGALMLAALSHL). Topologically, residues 2668 to 2711 (HRFLLSMWVLPPGTFTDAFPGLLFHFPRRSQKDCLLGLSKSDQR) are extracellular. A helical membrane pass occupies residues 2712-2732 (AMACYFGILLIVSATLCFGML). At 2733-2849 (RGFLMTLPQK…AAEPADIKDF (117 aa)) the chain is on the cytoplasmic side.

Belongs to the polycystin family. Heterodimer. Interacts with PKD2 to form a calcium channel. Interacts with PKD2L1; to form ciliary calcium channel. May interact with GNA12, GNAS, GNAI1 and GNAI2. Detected in testis and in fetal and adult heart.

It is found in the cell projection. The protein localises to the cilium membrane. Functionally, component of a calcium-permeant ion channel formed by PKD1L2 and PKD1L1 in primary cilia, where it controls cilium calcium concentration, without affecting cytoplasmic calcium concentration, and regulates sonic hedgehog/SHH signaling and GLI2 transcription. The PKD1L1:PKD2L1 channel complex is mechanosensitive only at high pressures and is highly temperature sensitive. Also involved in left/right axis specification downstream of nodal flow by forming a complex with PKD2 in cilia to facilitate flow detection in left/right patterning. May function as a G-protein-coupled receptor. In Homo sapiens (Human), this protein is Polycystin-1-like protein 1.